The primary structure comprises 578 residues: Suppressor of smlA (578 aa).

Functionally, involved in regulation of group size of aggregation streams. This Dictyostelium discoideum (Social amoeba) protein is Suppressor of smlA (sslA1).